We begin with the raw amino-acid sequence, 168 residues long: Large ribosomal subunit protein uL10 (168 aa).

The protein belongs to the universal ribosomal protein uL10 family. As to quaternary structure, part of the ribosomal stalk of the 50S ribosomal subunit. The N-terminus interacts with L11 and the large rRNA to form the base of the stalk. The C-terminus forms an elongated spine to which L12 dimers bind in a sequential fashion forming a multimeric L10(L12)X complex.

In terms of biological role, forms part of the ribosomal stalk, playing a central role in the interaction of the ribosome with GTP-bound translation factors. In Acinetobacter baylyi (strain ATCC 33305 / BD413 / ADP1), this protein is Large ribosomal subunit protein uL10.